Here is a 419-residue protein sequence, read N- to C-terminus: UDP-N-acetylglucosamine 1-carboxyvinyltransferase (419 aa).

Lysine 22 to asparagine 23 is a binding site for phosphoenolpyruvate. Residue arginine 93 participates in UDP-N-acetyl-alpha-D-glucosamine binding. The active-site Proton donor is cysteine 117. Cysteine 117 is modified (2-(S-cysteinyl)pyruvic acid O-phosphothioketal). Aspartate 306 and isoleucine 328 together coordinate UDP-N-acetyl-alpha-D-glucosamine.

This sequence belongs to the EPSP synthase family. MurA subfamily.

It is found in the cytoplasm. It catalyses the reaction phosphoenolpyruvate + UDP-N-acetyl-alpha-D-glucosamine = UDP-N-acetyl-3-O-(1-carboxyvinyl)-alpha-D-glucosamine + phosphate. Its pathway is cell wall biogenesis; peptidoglycan biosynthesis. Cell wall formation. Adds enolpyruvyl to UDP-N-acetylglucosamine. The sequence is that of UDP-N-acetylglucosamine 1-carboxyvinyltransferase from Magnetococcus marinus (strain ATCC BAA-1437 / JCM 17883 / MC-1).